Reading from the N-terminus, the 383-residue chain is Erythronate-4-phosphate dehydrogenase (383 aa).

Residues Ser-45 and Thr-67 each contribute to the substrate site. Asp-147 provides a ligand contact to NAD(+). The active site involves Arg-208. Asp-232 contacts NAD(+). Glu-237 is an active-site residue. The active-site Proton donor is the His-254. An NAD(+)-binding site is contributed by Gly-257. Tyr-258 contacts substrate.

It belongs to the D-isomer specific 2-hydroxyacid dehydrogenase family. PdxB subfamily. Homodimer.

It is found in the cytoplasm. It catalyses the reaction 4-phospho-D-erythronate + NAD(+) = (R)-3-hydroxy-2-oxo-4-phosphooxybutanoate + NADH + H(+). Its pathway is cofactor biosynthesis; pyridoxine 5'-phosphate biosynthesis; pyridoxine 5'-phosphate from D-erythrose 4-phosphate: step 2/5. In terms of biological role, catalyzes the oxidation of erythronate-4-phosphate to 3-hydroxy-2-oxo-4-phosphonooxybutanoate. This Psychromonas ingrahamii (strain DSM 17664 / CCUG 51855 / 37) protein is Erythronate-4-phosphate dehydrogenase.